The chain runs to 242 residues: Polycomb group RING finger protein 3 (242 aa).

The RING-type zinc finger occupies C17–R56. The disordered stretch occupies residues A115–H149. Positions Q117–E140 are enriched in basic and acidic residues. The interval S132–L242 is interaction with BCORL1.

In terms of assembly, component of a PRC1-like complex that contains PCGF3, RNF2 and RYBP. Interacts with CBX6, CBX7 and CBX8. Interacts with BCORL1.

It localises to the nucleus. The protein localises to the nucleoplasm. Its function is as follows. Component of a Polycomb group (PcG) multiprotein PRC1-like complex, a complex class required to maintain the transcriptionally repressive state of many genes, including Hox genes, throughout development. PcG PRC1 complex acts via chromatin remodeling and modification of histones; it mediates monoubiquitination of histone H2A 'Lys-119', rendering chromatin heritably changed in its expressibility. Within the PRC1-like complex, regulates RNF2 ubiquitin ligase activity. Plays a redundant role with PCGF5 as part of a PRC1-like complex that mediates monoubiquitination of histone H2A 'Lys-119' on the X chromosome and is required for normal silencing of one copy of the X chromosome in XX females. The polypeptide is Polycomb group RING finger protein 3 (PCGF3) (Homo sapiens (Human)).